Here is a 146-residue protein sequence, read N- to C-terminus: Nitric oxide reductase subunit C (146 aa).

A helical; Signal-anchor membrane pass occupies residues 13 to 29; it reads IYFGGSVFFFLVFLGLT. Residues C61, C64, and H65 each coordinate heme c.

Heterodimer of cytochromes b (large subunit) and c (small subunit).

The protein resides in the cell membrane. Its function is as follows. Component of the anaerobic respiratory chain that transforms nitrate to dinitrogen (denitrification). The protein is Nitric oxide reductase subunit C (norC) of Stutzerimonas stutzeri (Pseudomonas stutzeri).